A 1382-amino-acid chain; its full sequence is ATP-dependent RNA helicase TDRD9 (1382 aa).

Positions 36 to 62 are disordered; it reads AAREEVQRQDVAPGAGPAAQAPALAQA. The segment covering 47–62 has biased composition (low complexity); the sequence is APGAGPAAQAPALAQA. Residues 142-308 form the Helicase ATP-binding domain; the sequence is VSLIESNSVV…FAVPVQNKMN (167 aa). 155–162 is an ATP binding site; the sequence is GATGSGKS. Positions 254–257 match the DEAH box motif; it reads DEVH. A Helicase C-terminal domain is found at 377-544; that stretch reads SGAQFVLERS…ILKVKLLDMG (168 aa). The 61-residue stretch at 944-1004 folds into the Tudor domain; it reads HPHPDLVCLA…MEIPCQFLEL (61 aa).

It belongs to the DEAD box helicase family. DEAH subfamily. In terms of assembly, interacts with piRNA-associated proteins PIWIL1 and PIWIL4.

The protein localises to the cytoplasm. The protein resides in the nucleus. The enzyme catalyses ATP + H2O = ADP + phosphate + H(+). Functionally, ATP-binding RNA helicase required during spermatogenesis. Required to repress transposable elements and prevent their mobilization, which is essential for the germline integrity. Acts via the piRNA metabolic process, which mediates the repression of transposable elements during meiosis by forming complexes composed of piRNAs and Piwi proteins and governs the methylation and subsequent repression of transposons. Acts downstream of piRNA biogenesis: exclusively required for transposon silencing in the nucleus, suggesting that it acts as a nuclear effector in the nucleus together with PIWIL4. The chain is ATP-dependent RNA helicase TDRD9 from Homo sapiens (Human).